A 574-amino-acid chain; its full sequence is K(+)/H(+) antiporter NhaP2 (574 aa).

Transmembrane regions (helical) follow at residues 6–26 (INSF…LSPM), 30–50 (LGIP…EDGL), 58–78 (YSTA…DGGM), 87–107 (VALW…TSIT), 109–129 (LMAA…GAIV), 173–193 (IAIL…VSFI), 196–216 (FGLG…LVNL), 219–239 (LAEG…YAVS), 242–262 (LGGS…NKPT), 271–291 (VLDG…GLLL), 299–319 (ILLP…PLAV), 335–355 (WFIS…VFPM), and 359–379 (LPGA…SLLI). In terms of domain architecture, RCK C-terminal spans 405 to 486 (SGVEIYPSSE…LDALSHLFSQ (82 aa)).

It belongs to the monovalent cation:proton antiporter 1 (CPA1) transporter (TC 2.A.36) family. NhaP2 subfamily.

Its subcellular location is the cell inner membrane. It catalyses the reaction K(+)(in) + H(+)(out) = K(+)(out) + H(+)(in). Its function is as follows. K(+)/H(+) antiporter that extrudes potassium in exchange for external protons and maintains the internal concentration of potassium under toxic levels. This chain is K(+)/H(+) antiporter NhaP2, found in Shewanella sp. (strain W3-18-1).